The sequence spans 403 residues: Rhomboid-like protein 15 (403 aa).

The next 5 membrane-spanning stretches (helical) occupy residues 22-42, 70-90, 103-123, 141-161, and 176-196; these read IPFL…ICLL, AIIF…LVPM, LLYL…LIAS, AIGF…LSGV, and LYPW…SLLG. The active-site Nucleophile is the serine 145. Catalysis depends on histidine 197, which acts as the Charge relay system. Residues 198 to 218 traverse the membrane as a helical segment; the sequence is LCGILSGFSYSYGLFNFLMPG. The interval 282-316 is disordered; sequence EASNQSSEDSRFPGRGRTLSTARDPTAPAGETDPN. Residues 361-401 form the UBA domain; it reads AASEEQIQKLVAMGFDRTQVEVALAAADDDLTVAVEILMSQ.

Belongs to the peptidase S54 family.

The protein localises to the membrane. In terms of biological role, probable rhomboid-type serine protease that catalyzes intramembrane proteolysis. May function in senescence. The chain is Rhomboid-like protein 15 from Arabidopsis thaliana (Mouse-ear cress).